Here is a 45-residue protein sequence, read N- to C-terminus: Large ribosomal subunit protein bL34 (45 aa).

Over residues 1–10 (MTQRTLGGTN) the composition is skewed to polar residues. Positions 1 to 45 (MTQRTLGGTNRKQKRTSGFRARMRKSNGRKVIQARRKKGRHRLSV) are disordered. The segment covering 11 to 45 (RKQKRTSGFRARMRKSNGRKVIQARRKKGRHRLSV) has biased composition (basic residues).

It belongs to the bacterial ribosomal protein bL34 family.

The sequence is that of Large ribosomal subunit protein bL34 from Crocosphaera subtropica (strain ATCC 51142 / BH68) (Cyanothece sp. (strain ATCC 51142)).